A 166-amino-acid polypeptide reads, in one-letter code: NADH-ubiquinone oxidoreductase chain 6 (166 aa).

The next 6 membrane-spanning stretches (helical) occupy residues 4-24 (FFSLVLVFLVLSVVVLGVVSA), 27-47 (QGVVALMGVSFFCCIFMVFLG), 50-70 (FAALVMYIVYLGGLVVVFGYC), 82-102 (VGGTKYFIVCVSLLLVVLLCL), 109-129 (LLVYVNWGDLVCLEMNGVGVF), and 135-155 (WGLIVCSWGLLVVLFSILVIL).

The protein belongs to the complex I subunit 6 family.

Its subcellular location is the mitochondrion membrane. The enzyme catalyses a ubiquinone + NADH + 5 H(+)(in) = a ubiquinol + NAD(+) + 4 H(+)(out). In terms of biological role, core subunit of the mitochondrial membrane respiratory chain NADH dehydrogenase (Complex I) that is believed to belong to the minimal assembly required for catalysis. Complex I functions in the transfer of electrons from NADH to the respiratory chain. The immediate electron acceptor for the enzyme is believed to be ubiquinone. The protein is NADH-ubiquinone oxidoreductase chain 6 (MT-ND6) of Lycodon semicarinatus (Ryukyu odd-tooth snake).